A 478-amino-acid polypeptide reads, in one-letter code: Glycogen synthase (478 aa).

K16 is an ADP-alpha-D-glucose binding site.

It belongs to the glycosyltransferase 1 family. Bacterial/plant glycogen synthase subfamily.

It catalyses the reaction [(1-&gt;4)-alpha-D-glucosyl](n) + ADP-alpha-D-glucose = [(1-&gt;4)-alpha-D-glucosyl](n+1) + ADP + H(+). It functions in the pathway glycan biosynthesis; glycogen biosynthesis. Synthesizes alpha-1,4-glucan chains using ADP-glucose. The chain is Glycogen synthase from Lachnospira eligens (strain ATCC 27750 / DSM 3376 / VPI C15-48 / C15-B4) (Eubacterium eligens).